A 211-amino-acid chain; its full sequence is Thymidylate kinase (211 aa).

11–18 (GPDGAGKT) lines the ATP pocket.

It belongs to the thymidylate kinase family.

It catalyses the reaction dTMP + ATP = dTDP + ADP. Its function is as follows. Phosphorylation of dTMP to form dTDP in both de novo and salvage pathways of dTTP synthesis. In Streptococcus uberis (strain ATCC BAA-854 / 0140J), this protein is Thymidylate kinase.